The primary structure comprises 276 residues: Elongation factor Ts (276 aa).

Residues 80–83 form an involved in Mg(2+) ion dislocation from EF-Tu region; the sequence is TDFV.

This sequence belongs to the EF-Ts family.

The protein resides in the cytoplasm. Its function is as follows. Associates with the EF-Tu.GDP complex and induces the exchange of GDP to GTP. It remains bound to the aminoacyl-tRNA.EF-Tu.GTP complex up to the GTP hydrolysis stage on the ribosome. This chain is Elongation factor Ts, found in Kocuria rhizophila (strain ATCC 9341 / DSM 348 / NBRC 103217 / DC2201).